Reading from the N-terminus, the 300-residue chain is F-box/LRR-repeat protein 15 (300 aa).

Residue methionine 1 is modified to N-acetylmethionine. One can recognise an F-box domain in the interval leucine 19–aspartate 66. Residues asparagine 113–arginine 269 form an interaction with SMURF1 region. LRR repeat units lie at residues arginine 141–alanine 162, alanine 167–alanine 188, glycine 194–alanine 215, glutamate 220–alanine 241, and alanine 246–arginine 267.

This sequence belongs to the FBXL15 family. As to quaternary structure, part of the SCF (SKP1-CUL1-F-box) E3 ubiquitin-protein ligase complex SCF(FBXL15) composed of CUL1, SKP1, RBX1 and FBXL15.

The protein localises to the cytoplasm. It participates in protein modification; protein ubiquitination. Substrate recognition component of a SCF (SKP1-CUL1-F-box protein) E3 ubiquitin-protein ligase complex which mediates the ubiquitination and subsequent proteasomal degradation of SMURF1, thereby acting as a positive regulator of the BMP signaling pathway. Required for dorsal/ventral pattern formation and bone mass maintenance. Also mediates ubiquitination of SMURF2 and WWP2. This chain is F-box/LRR-repeat protein 15 (FBXL15), found in Bos taurus (Bovine).